The following is a 397-amino-acid chain: Probable inactive purple acid phosphatase 28 (397 aa).

An N-terminal signal peptide occupies residues 1-30 (MNCSIGNWKHTVLYLTLIVSLLYFIESLIS). 2 N-linked (GlcNAc...) asparagine glycosylation sites follow: N91 and N209. H266 and H314 together coordinate Zn(2+). A substrate-binding site is contributed by 314-316 (HDH). H316 is a binding site for Fe cation.

Belongs to the metallophosphoesterase superfamily. Purple acid phosphatase family. As to quaternary structure, homodimer. Requires Fe cation as cofactor. Zn(2+) is required as a cofactor. Expressed in roots, stems, leaves, flowers and siliques.

The protein localises to the secreted. The chain is Probable inactive purple acid phosphatase 28 (PAP28) from Arabidopsis thaliana (Mouse-ear cress).